Consider the following 538-residue polypeptide: Eukaryotic translation initiation factor 3 subunit L (538 aa).

The 209-residue stretch at 305–513 folds into the PCI domain; it reads TFSDILLYIQ…IHIADTKVSH (209 aa).

This sequence belongs to the eIF-3 subunit L family. In terms of assembly, component of the eukaryotic translation initiation factor 3 (eIF-3) complex. The eIF-3 complex interacts with pix.

Its subcellular location is the cytoplasm. Component of the eukaryotic translation initiation factor 3 (eIF-3) complex, which is involved in protein synthesis of a specialized repertoire of mRNAs and, together with other initiation factors, stimulates binding of mRNA and methionyl-tRNAi to the 40S ribosome. The eIF-3 complex specifically targets and initiates translation of a subset of mRNAs involved in cell proliferation. The chain is Eukaryotic translation initiation factor 3 subunit L from Drosophila mojavensis (Fruit fly).